The chain runs to 295 residues: Urease accessory protein UreD (295 aa).

Belongs to the UreD family. UreD, UreF and UreG form a complex that acts as a GTP-hydrolysis-dependent molecular chaperone, activating the urease apoprotein by helping to assemble the nickel containing metallocenter of UreC. The UreE protein probably delivers the nickel.

The protein resides in the cytoplasm. Required for maturation of urease via the functional incorporation of the urease nickel metallocenter. In Saccharophagus degradans (strain 2-40 / ATCC 43961 / DSM 17024), this protein is Urease accessory protein UreD.